We begin with the raw amino-acid sequence, 307 residues long: Serine/threonine-protein phosphatase PP2A-5 catalytic subunit (307 aa).

Positions 55, 57, 83, and 115 each coordinate Mn(2+). H116 serves as the catalytic Proton donor. 2 residues coordinate Mn(2+): H165 and H239. L307 bears the Leucine methyl ester mark.

This sequence belongs to the PPP phosphatase family. PP-2A subfamily. PP2A consists of a common heterodimeric core enzyme, composed of a 36 kDa catalytic subunit (subunit C) and a 65 kDa constant regulatory subunit (subunit A), that associates with a variety of regulatory subunits such as subunits B (the R2/B/PR55/B55, R3/B''/PR72/PR130/PR59 and R5/B'/B56 families). Also interacts with CHIP and TAF12B. Interacts with B'THETA. Interacts with CLC-A, CLC-B, CLC-C and CLC-G. The cofactor is Mn(2+). Post-translationally, reversibly methyl esterified on Leu-307 by leucine carboxyl methyltransferase 1 (LCMT1) and pectin methylesterase 1 (PME1). Carboxyl methylation influences the affinity of the catalytic subunit for the different regulatory subunits, thereby modulating the PP2A holoenzyme's substrate specificity, enzyme activity and cellular localization. Phosphorylation of either threonine (by autophosphorylation-activated protein kinase) or tyrosine results in inactivation of the phosphatase. Auto-dephosphorylation has been suggested as a mechanism for reactivation. In terms of processing, ubiquitinated. CHIP-mediated ubiquitination enhances phosphatase activity after an abiotic stress such as low temperature or darkness.

It localises to the cytoplasm. The protein resides in the cytosol. It is found in the peroxisome. It catalyses the reaction O-phospho-L-seryl-[protein] + H2O = L-seryl-[protein] + phosphate. The enzyme catalyses O-phospho-L-threonyl-[protein] + H2O = L-threonyl-[protein] + phosphate. Associates with the serine/threonine-protein phosphatase PP2A regulatory subunits A and B' to positively regulates beta-oxidation of fatty acids and protoauxins in peroxisomes by dephosphorylating peroxisomal beta-oxidation-related proteins. Involved in the positive regulation of salt stress responses. May function by increasing chloride channel activities on vacuolar membranes. The chain is Serine/threonine-protein phosphatase PP2A-5 catalytic subunit from Arabidopsis thaliana (Mouse-ear cress).